The chain runs to 1342 residues: DNA-directed RNA polymerase subunit beta (1342 aa).

The protein belongs to the RNA polymerase beta chain family. As to quaternary structure, the RNAP catalytic core consists of 2 alpha, 1 beta, 1 beta' and 1 omega subunit. When a sigma factor is associated with the core the holoenzyme is formed, which can initiate transcription.

It carries out the reaction RNA(n) + a ribonucleoside 5'-triphosphate = RNA(n+1) + diphosphate. In terms of biological role, DNA-dependent RNA polymerase catalyzes the transcription of DNA into RNA using the four ribonucleoside triphosphates as substrates. In Aeromonas hydrophila subsp. hydrophila (strain ATCC 7966 / DSM 30187 / BCRC 13018 / CCUG 14551 / JCM 1027 / KCTC 2358 / NCIMB 9240 / NCTC 8049), this protein is DNA-directed RNA polymerase subunit beta.